The following is a 379-amino-acid chain: 2-dehydropantoate 2-reductase (379 aa).

NADP(+)-binding positions include 13–18 and Asn-119; that span reads GLGAMG. A substrate-binding site is contributed by Asn-119. Lys-224 acts as the Proton donor in catalysis. Substrate contacts are provided by Asn-228, Asn-232, and Ser-316. An NADP(+)-binding site is contributed by Glu-328.

It belongs to the ketopantoate reductase family.

It catalyses the reaction (R)-pantoate + NADP(+) = 2-dehydropantoate + NADPH + H(+). It participates in cofactor biosynthesis; (R)-pantothenate biosynthesis; (R)-pantoate from 3-methyl-2-oxobutanoate: step 2/2. In terms of biological role, catalyzes the NADPH-dependent reduction of ketopantoate into pantoic acid. The chain is 2-dehydropantoate 2-reductase (PAN5) from Saccharomyces cerevisiae (strain ATCC 204508 / S288c) (Baker's yeast).